The following is a 43-amino-acid chain: Potassium channel toxin gamma-KTx 4.12 (43 aa).

Cystine bridges form between Cys5/Cys23, Cys11/Cys34, Cys20/Cys39, and Cys24/Cys41.

Expressed by the venom gland.

Its subcellular location is the secreted. In terms of biological role, reversibly blocks Kv11/ERG potassium channels. Is less toxic than ergtoxin (AC Q86QT3). The chain is Potassium channel toxin gamma-KTx 4.12 from Centruroides sculpturatus (Arizona bark scorpion).